Here is a 137-residue protein sequence, read N- to C-terminus: NADH dehydrogenase [ubiquinone] 1 beta subcomplex subunit 7 (137 aa).

The N-myristoyl glycine moiety is linked to residue Gly-2. In terms of domain architecture, CHCH spans 56–98; it reads RDYCAHYLIRFLKCKRDSFPNFLACKHERHDWDYCEHLDYVKR. The Cx9C motif 1 signature appears at 59–69; that stretch reads CAHYLIRFLKC. 2 disulfide bridges follow: Cys-59–Cys-90 and Cys-69–Cys-80. Ser-73 is modified (phosphoserine). A Cx9C motif 2 motif is present at residues 80–90; sequence CKHERHDWDYC. The interval 110-137 is disordered; sequence QRKKRREQREADMAKGLGPGEVAPEVAL.

The protein belongs to the complex I NDUFB7 subunit family. As to quaternary structure, complex I is composed of 45 different subunits.

It is found in the mitochondrion inner membrane. It localises to the mitochondrion intermembrane space. Its function is as follows. Accessory subunit of the mitochondrial membrane respiratory chain NADH dehydrogenase (Complex I), that is believed not to be involved in catalysis. Complex I functions in the transfer of electrons from NADH to the respiratory chain. The immediate electron acceptor for the enzyme is believed to be ubiquinone. This Bos taurus (Bovine) protein is NADH dehydrogenase [ubiquinone] 1 beta subcomplex subunit 7 (NDUFB7).